The chain runs to 187 residues: Preprocaerulein clone PXC202 (187 aa).

The propeptide occupies 1–9; the sequence is NDERRFADG. Positions 1–21 are disordered; it reads NDERRFADGQQDYTGWMDFGR. Tyrosine 13 bears the Sulfotyrosine mark. Phenylalanine 19 bears the Phenylalanine amide mark. A propeptide spanning residues 23–73 is cleaved from the precursor; sequence DDEDDVNERDVRGFGSFLGKALKAALKIGANALGGSPQQREANDERRFADG. Tyrosine 77 carries the post-translational modification Sulfotyrosine. Position 83 is a phenylalanine amide (phenylalanine 83). Residues 87-137 constitute a propeptide that is removed on maturation; that stretch reads DDEDDVNERDVRGFGSFLGKALKAALKIGANALGGSLQQREVNDERRFADG. Position 141 is a sulfotyrosine (tyrosine 141). Phenylalanine 147 carries the phenylalanine amide modification. Positions 151-152 are excised as a propeptide; it reads DG. Tyrosine 156 bears the Sulfotyrosine mark. Position 162 is a phenylalanine amide (phenylalanine 162). A propeptide spanning residues 166–187 is cleaved from the precursor; sequence DDEDDVHERDVRGFGSFLGKAL.

This sequence belongs to the gastrin/cholecystokinin family. In terms of tissue distribution, expressed by the skin glands.

The protein resides in the secreted. Its function is as follows. The pharmacological activities of caerulein are quite similar to the physiological activities of gastrin and related peptides. The chain is Preprocaerulein clone PXC202 from Xenopus laevis (African clawed frog).